Consider the following 343-residue polypeptide: L-threonine 3-dehydrogenase (343 aa).

Residue Cys38 coordinates Zn(2+). Residues Thr40 and His43 each act as charge relay system in the active site. His63, Glu64, Cys93, Cys96, Cys99, and Cys107 together coordinate Zn(2+). NAD(+) is bound by residues Ile175, Asp195, Arg200, 262–264, and 286–287; these read LGI and IY.

The protein belongs to the zinc-containing alcohol dehydrogenase family. Homotetramer. Requires Zn(2+) as cofactor.

The protein resides in the cytoplasm. The catalysed reaction is L-threonine + NAD(+) = (2S)-2-amino-3-oxobutanoate + NADH + H(+). The protein operates within amino-acid degradation; L-threonine degradation via oxydo-reductase pathway; glycine from L-threonine: step 1/2. Its function is as follows. Catalyzes the NAD(+)-dependent oxidation of L-threonine to 2-amino-3-ketobutyrate. This is L-threonine 3-dehydrogenase from Burkholderia mallei (strain NCTC 10247).